The chain runs to 557 residues: GMP synthase [glutamine-hydrolyzing] (557 aa).

Positions 13-209 constitute a Glutamine amidotransferase type-1 domain; it reads TILTLDFGSQ…AVDICGANPN (197 aa). The Nucleophile role is filled by Cys-89. Catalysis depends on residues His-183 and Glu-185. The GMPS ATP-PPase domain occupies 210–414; the sequence is WTMSKFVDQE…LGIAHELVMR (205 aa). ATP is bound at residue 238–244; the sequence is SGGVDST. XMP contacts are provided by Arg-311, Asp-476, Lys-549, and Glu-555.

In terms of assembly, homodimer. The cofactor is Mg(2+).

The protein localises to the cytoplasm. The protein resides in the cytosol. It carries out the reaction XMP + L-glutamine + ATP + H2O = GMP + L-glutamate + AMP + diphosphate + 2 H(+). The protein operates within purine metabolism; GMP biosynthesis; GMP from XMP (L-Gln route): step 1/1. Its activity is regulated as follows. Inhibited by 6-diazo-5-oxo-l-norleucine (DON) and acivicin (ACI). Its function is as follows. Catalyzes the conversion of xanthine monophosphate (XMP) to GMP in the presence of glutamine and ATP through an adenyl-XMP intermediate. The polypeptide is GMP synthase [glutamine-hydrolyzing] (gua1) (Aspergillus fumigatus (strain ATCC MYA-4609 / CBS 101355 / FGSC A1100 / Af293) (Neosartorya fumigata)).